Here is a 308-residue protein sequence, read N- to C-terminus: MEILLIFLLALVIDMVFGDPPNAFHPVAYMGKVISLFERAGFKGGKGYQFVYGIVMVIFTMALFFVPVYFLLDWLQGINSIVYIIVSAILFKMCFTVTGLRKAALLIKRLLEKDDIAQARFELRSLVSRDTSKLPQPKLVAAAVESVAESIGDGFVAPLFFFLIFGVPGVMAYRVVSTFDSMVGYRGKYEYLGKFAARFDDVLNFIPARLSALCILVASFFGRYSPAGAWRIMWRDHGKTQSPNAGWPMATAAGALEVCLEKVGHYSLGDDIRPLLPQTISCSLVLINNAGCIWVLISVGVIYFARIA.

6 consecutive transmembrane segments (helical) span residues Met-1 to Pro-21, Phe-50 to Phe-70, Leu-71 to Phe-91, Ile-151 to Met-171, Val-202 to Gly-222, and Leu-284 to Phe-304.

It belongs to the CobD/CbiB family.

It localises to the cell membrane. Its pathway is cofactor biosynthesis; adenosylcobalamin biosynthesis. In terms of biological role, converts cobyric acid to cobinamide by the addition of aminopropanol on the F carboxylic group. The chain is Cobalamin biosynthesis protein CobD from Dehalococcoides mccartyi (strain CBDB1).